The following is a 180-amino-acid chain: DNA-directed RNA polymerase subunit Rpo7 (180 aa).

An S1 motif domain is found at 82-165 (QEVVEGEVLQ…RLPRIALTMR (84 aa)).

This sequence belongs to the eukaryotic RPB7/RPC8 RNA polymerase subunit family. As to quaternary structure, part of the 13-subunit RNA polymerase complex. Forms a stalk with Rpo4 that extends from the main structure.

The protein localises to the cytoplasm. The enzyme catalyses RNA(n) + a ribonucleoside 5'-triphosphate = RNA(n+1) + diphosphate. In terms of biological role, DNA-dependent RNA polymerase (RNAP) catalyzes the transcription of DNA into RNA using the four ribonucleoside triphosphates as substrates. The highly mobile Rpo4/Rpo7 heterodimer is conditionally required for transcription initiation. In Saccharolobus shibatae (strain ATCC 51178 / DSM 5389 / JCM 8931 / NBRC 15437 / B12) (Sulfolobus shibatae), this protein is DNA-directed RNA polymerase subunit Rpo7.